The sequence spans 407 residues: Proteasome-activating nucleotidase (407 aa).

Positions 22–67 (KEKTQIAELESKVLRLELKNKDISRENVQIKKENEILKRELDKLRI) form a coiled coil. Residues 192 to 197 (GTGKTL) and histidine 331 each bind ATP. The tract at residues 405-407 (MYG) is docks into pockets in the proteasome alpha-ring to cause gate opening.

The protein belongs to the AAA ATPase family. Homohexamer. The hexameric complex has a two-ring architecture resembling a top hat that caps the 20S proteasome core at one or both ends. Upon ATP-binding, the C-terminus of PAN interacts with the alpha-rings of the proteasome core by binding to the intersubunit pockets.

The protein localises to the cytoplasm. ATPase which is responsible for recognizing, binding, unfolding and translocation of substrate proteins into the archaeal 20S proteasome core particle. Is essential for opening the gate of the 20S proteasome via an interaction with its C-terminus, thereby allowing substrate entry and access to the site of proteolysis. Thus, the C-termini of the proteasomal ATPase function like a 'key in a lock' to induce gate opening and therefore regulate proteolysis. Unfolding activity requires energy from ATP hydrolysis, whereas ATP binding alone promotes ATPase-20S proteasome association which triggers gate opening, and supports translocation of unfolded substrates. The sequence is that of Proteasome-activating nucleotidase from Methanococcus maripaludis (strain C6 / ATCC BAA-1332).